The primary structure comprises 97 residues: Co-chaperonin GroES (97 aa).

Belongs to the GroES chaperonin family. In terms of assembly, heptamer of 7 subunits arranged in a ring. Interacts with the chaperonin GroEL.

The protein localises to the cytoplasm. Together with the chaperonin GroEL, plays an essential role in assisting protein folding. The GroEL-GroES system forms a nano-cage that allows encapsulation of the non-native substrate proteins and provides a physical environment optimized to promote and accelerate protein folding. GroES binds to the apical surface of the GroEL ring, thereby capping the opening of the GroEL channel. The sequence is that of Co-chaperonin GroES from Arthrobacter sp. (strain FB24).